The chain runs to 357 residues: GTPase Obg (357 aa).

The Obg domain occupies 1 to 159 (MKFVDEAEIQ…RTLKLELKLL (159 aa)). Residues 160-343 (ADIGMLGFPN…IMKSAMTLFE (184 aa)) enclose the OBG-type G domain. Residues 166–173 (GFPNVGKS), 191–195 (FTTLY), 213–216 (DVPG), 293–296 (NKAD), and 324–326 (SAV) each bind GTP. Mg(2+)-binding residues include S173 and T193.

It belongs to the TRAFAC class OBG-HflX-like GTPase superfamily. OBG GTPase family. In terms of assembly, monomer. Mg(2+) serves as cofactor.

The protein localises to the cytoplasm. Functionally, an essential GTPase which binds GTP, GDP and possibly (p)ppGpp with moderate affinity, with high nucleotide exchange rates and a fairly low GTP hydrolysis rate. Plays a role in control of the cell cycle, stress response, ribosome biogenesis and in those bacteria that undergo differentiation, in morphogenesis control. In Xylella fastidiosa (strain M23), this protein is GTPase Obg.